The chain runs to 348 residues: Anthranilate phosphoribosyltransferase (348 aa).

5-phospho-alpha-D-ribose 1-diphosphate-binding positions include Gly87, 90-91 (GD), Thr95, 97-100 (NIST), 115-123 (KHGNRSASG), and Ser127. Position 87 (Gly87) interacts with anthranilate. Ser99 is a binding site for Mg(2+). Asn118 is an anthranilate binding site. Residue Arg173 participates in anthranilate binding. Asp232 and Glu233 together coordinate Mg(2+).

The protein belongs to the anthranilate phosphoribosyltransferase family. Homodimer. Mg(2+) is required as a cofactor.

It carries out the reaction N-(5-phospho-beta-D-ribosyl)anthranilate + diphosphate = 5-phospho-alpha-D-ribose 1-diphosphate + anthranilate. It participates in amino-acid biosynthesis; L-tryptophan biosynthesis; L-tryptophan from chorismate: step 2/5. Catalyzes the transfer of the phosphoribosyl group of 5-phosphorylribose-1-pyrophosphate (PRPP) to anthranilate to yield N-(5'-phosphoribosyl)-anthranilate (PRA). The protein is Anthranilate phosphoribosyltransferase of Synechococcus sp. (strain WH7803).